Reading from the N-terminus, the 523-residue chain is GMP synthase [glutamine-hydrolyzing] (523 aa).

One can recognise a Glutamine amidotransferase type-1 domain in the interval 9-198; sequence PVLVVDYGAQ…LTEIAGLEQN (190 aa). Cysteine 86 (nucleophile) is an active-site residue. Residues histidine 172 and glutamate 174 contribute to the active site. Residues 199-397 form the GMPS ATP-PPase domain; that stretch reads WTAANIAEEL…LGLPEVIVAR (199 aa). 227-233 provides a ligand contact to ATP; the sequence is SGGVDSA.

In terms of assembly, homodimer.

The catalysed reaction is XMP + L-glutamine + ATP + H2O = GMP + L-glutamate + AMP + diphosphate + 2 H(+). It functions in the pathway purine metabolism; GMP biosynthesis; GMP from XMP (L-Gln route): step 1/1. Functionally, catalyzes the synthesis of GMP from XMP. The protein is GMP synthase [glutamine-hydrolyzing] of Corynebacterium efficiens (strain DSM 44549 / YS-314 / AJ 12310 / JCM 11189 / NBRC 100395).